We begin with the raw amino-acid sequence, 142 residues long: ATP synthase epsilon chain (142 aa).

Belongs to the ATPase epsilon chain family. In terms of assembly, F-type ATPases have 2 components, CF(1) - the catalytic core - and CF(0) - the membrane proton channel. CF(1) has five subunits: alpha(3), beta(3), gamma(1), delta(1), epsilon(1). CF(0) has three main subunits: a, b and c.

The protein resides in the cell inner membrane. Its function is as follows. Produces ATP from ADP in the presence of a proton gradient across the membrane. This chain is ATP synthase epsilon chain, found in Mannheimia succiniciproducens (strain KCTC 0769BP / MBEL55E).